The chain runs to 367 residues: MSIVVQSAVTHFRPVMILAGGTGGHIFPGLAVAGVLRARGVPVVWLGAAGKMETHLVPKHGIEIQTIAVSGVRGHGMLALLGAPVRVLPAIFAAMRVLRRYRPRVVVSFGGFAAGPGGIAARLMGLPLIVHEQNRAPGMTNRVLARVARRVLSGFPGSFVAEEVVGNPVRKDIAALPAPGVRFAGRSGPVRLLVLGGSQGARVMNNALPVVLRVLSDSDVAVEVRHQCGEALRAETEGAYAYAGVAARVEPFISDMAAAYSWADLVVCRAGASTLAELCAAGVGSVLIPFPAAVDDHQRRNAEYLVAAGAALLLQQQDRAFYVYLESVLRDLLSNPMRRLAMAEAARGLAKSDAAECIAEIILKESI.

Residues 22–24, asparagine 134, arginine 170, serine 198, isoleucine 253, and glutamine 298 contribute to the UDP-N-acetyl-alpha-D-glucosamine site; that span reads TGG.

The protein belongs to the glycosyltransferase 28 family. MurG subfamily.

The protein localises to the cell inner membrane. It carries out the reaction di-trans,octa-cis-undecaprenyl diphospho-N-acetyl-alpha-D-muramoyl-L-alanyl-D-glutamyl-meso-2,6-diaminopimeloyl-D-alanyl-D-alanine + UDP-N-acetyl-alpha-D-glucosamine = di-trans,octa-cis-undecaprenyl diphospho-[N-acetyl-alpha-D-glucosaminyl-(1-&gt;4)]-N-acetyl-alpha-D-muramoyl-L-alanyl-D-glutamyl-meso-2,6-diaminopimeloyl-D-alanyl-D-alanine + UDP + H(+). Its pathway is cell wall biogenesis; peptidoglycan biosynthesis. Cell wall formation. Catalyzes the transfer of a GlcNAc subunit on undecaprenyl-pyrophosphoryl-MurNAc-pentapeptide (lipid intermediate I) to form undecaprenyl-pyrophosphoryl-MurNAc-(pentapeptide)GlcNAc (lipid intermediate II). This Xylella fastidiosa (strain M23) protein is UDP-N-acetylglucosamine--N-acetylmuramyl-(pentapeptide) pyrophosphoryl-undecaprenol N-acetylglucosamine transferase.